We begin with the raw amino-acid sequence, 319 residues long: tRNA uridine(34) hydroxylase (319 aa).

The 95-residue stretch at 124–218 (LDEDTVILDA…YGKNEETKGE (95 aa)) folds into the Rhodanese domain. Cysteine 178 serves as the catalytic Cysteine persulfide intermediate.

It belongs to the TrhO family.

It carries out the reaction uridine(34) in tRNA + AH2 + O2 = 5-hydroxyuridine(34) in tRNA + A + H2O. In terms of biological role, catalyzes oxygen-dependent 5-hydroxyuridine (ho5U) modification at position 34 in tRNAs. The protein is tRNA uridine(34) hydroxylase of Listeria monocytogenes serovar 1/2a (strain ATCC BAA-679 / EGD-e).